The following is a 171-amino-acid chain: Phosphopantetheine adenylyltransferase (171 aa).

Thr9 provides a ligand contact to substrate. ATP contacts are provided by residues 9–10 (TF) and His17. Substrate-binding residues include Lys41, Leu73, and Arg87. Residues 88-90 (GLR), Glu98, and 123-129 (YQFISGT) contribute to the ATP site.

This sequence belongs to the bacterial CoaD family. In terms of assembly, homohexamer. Mg(2+) serves as cofactor.

It is found in the cytoplasm. The enzyme catalyses (R)-4'-phosphopantetheine + ATP + H(+) = 3'-dephospho-CoA + diphosphate. It functions in the pathway cofactor biosynthesis; coenzyme A biosynthesis; CoA from (R)-pantothenate: step 4/5. In terms of biological role, reversibly transfers an adenylyl group from ATP to 4'-phosphopantetheine, yielding dephospho-CoA (dPCoA) and pyrophosphate. The polypeptide is Phosphopantetheine adenylyltransferase (Paraburkholderia phytofirmans (strain DSM 17436 / LMG 22146 / PsJN) (Burkholderia phytofirmans)).